A 255-amino-acid chain; its full sequence is MLKIGPYEFSSRLLLGTGKYPSLDVQKEAVEASGAEILTFAVRRMNIFSPEQPNFLEQLDLSKYKLLPNTAGAKTAEEAVRIARLAKASGLCDMIKVEVIGCDKTLLPDPVETLKAAEMLLEEGFIVLPYTSDDVVLARRLQELGCHAVMPGASPIGSGQGIINPLNLSFIIEQATVPVIVDAGIGGPADAVLAMELGADGVLLNTAVSGAADPVKMAKAMKLAIEAGRLGYEAGRIPKKRYASASSPMEGMSVV.

The Schiff-base intermediate with DXP role is filled by Lys96. 1-deoxy-D-xylulose 5-phosphate is bound by residues Gly157, 183-184 (AG), and 205-206 (NT).

Belongs to the ThiG family. As to quaternary structure, homotetramer. Forms heterodimers with either ThiH or ThiS.

The protein localises to the cytoplasm. It catalyses the reaction [ThiS sulfur-carrier protein]-C-terminal-Gly-aminoethanethioate + 2-iminoacetate + 1-deoxy-D-xylulose 5-phosphate = [ThiS sulfur-carrier protein]-C-terminal Gly-Gly + 2-[(2R,5Z)-2-carboxy-4-methylthiazol-5(2H)-ylidene]ethyl phosphate + 2 H2O + H(+). Its pathway is cofactor biosynthesis; thiamine diphosphate biosynthesis. Its function is as follows. Catalyzes the rearrangement of 1-deoxy-D-xylulose 5-phosphate (DXP) to produce the thiazole phosphate moiety of thiamine. Sulfur is provided by the thiocarboxylate moiety of the carrier protein ThiS. In vitro, sulfur can be provided by H(2)S. The polypeptide is Thiazole synthase (Geobacillus thermodenitrificans (strain NG80-2)).